The sequence spans 447 residues: Asparagine--tRNA ligase (447 aa).

It belongs to the class-II aminoacyl-tRNA synthetase family. Homodimer.

It localises to the cytoplasm. It catalyses the reaction tRNA(Asn) + L-asparagine + ATP = L-asparaginyl-tRNA(Asn) + AMP + diphosphate + H(+). The chain is Asparagine--tRNA ligase from Streptococcus pneumoniae serotype 4 (strain ATCC BAA-334 / TIGR4).